A 449-amino-acid chain; its full sequence is Packaging protein 1 (449 aa).

Basic residues predominate over residues 1–10 (MESRGKHRLK). Residues 1-64 (MESRGKHRLK…SSNSILHCPP (64 aa)) form a disordered region. Residues 11–25 (KNGESKENLGEHEQA) show a composition bias toward basic and acidic residues. Residues 35-59 (SADSLSSPVAEPNFSSPGGRSSNSI) are compositionally biased toward polar residues. Residue 168–175 (GPTGSGKS) participates in ATP binding. Residues 437–449 (TAYSKKCDKLANK) are DNA-binding.

The protein belongs to the adenoviridae packaging protein 1 family. As to quaternary structure, homodimer. Part of a genome packaging complex composed of packaging proteins 1, 2 and 3; this complex specifically binds to the packaging sequence on the left end of viral genomic DNA and performs packaging of the viral genome. Interacts with protein 33K.

The protein localises to the virion. It localises to the host nucleus. It is found in the host nucleoplasm. Its subcellular location is the host nucleolus. Its function is as follows. Component of the packaging machinery which encapsidates the viral DNA into preformed capsids and transcriptional activator of the viral major late promoter (MLP). Binds, along with packaging proteins 2 and 3, to the specific packaging sequence on the left end of viral genomic DNA and displays ATPase activity thereby providing the power stroke of the packaging machinery. The activity of packaging protein IVa2 is stimulated by protein 33K which acts as a terminase. May be the protein that pumps DNA into the capsid powered by ATP hydrolysis. Specifically binds to the 5'-CG-3' nucleotides of the repeats making up the packaging sequence. Component of the DEF-A and DEF-B transcription factors that bind downstream elements of the major late promoter (MLP), and stimulate transcription from the MLP after initiation of viral DNA replication. DEF-A is a heterodimer packaging proteins 1 and 2 and DEF-B is a homodimer of packaging protein 1. The sequence is that of Packaging protein 1 from Mus musculus (Mouse).